Consider the following 642-residue polypeptide: 1-deoxy-D-xylulose-5-phosphate synthase (642 aa).

Residues histidine 79 and 120–122 contribute to the thiamine diphosphate site; that span reads AHS. Aspartate 155 lines the Mg(2+) pocket. Thiamine diphosphate-binding positions include 156-157, asparagine 184, tyrosine 293, and glutamate 375; that span reads GS. A Mg(2+)-binding site is contributed by asparagine 184.

This sequence belongs to the transketolase family. DXPS subfamily. Homodimer. Requires Mg(2+) as cofactor. Thiamine diphosphate is required as a cofactor.

The catalysed reaction is D-glyceraldehyde 3-phosphate + pyruvate + H(+) = 1-deoxy-D-xylulose 5-phosphate + CO2. It functions in the pathway metabolic intermediate biosynthesis; 1-deoxy-D-xylulose 5-phosphate biosynthesis; 1-deoxy-D-xylulose 5-phosphate from D-glyceraldehyde 3-phosphate and pyruvate: step 1/1. Catalyzes the acyloin condensation reaction between C atoms 2 and 3 of pyruvate and glyceraldehyde 3-phosphate to yield 1-deoxy-D-xylulose-5-phosphate (DXP). The protein is 1-deoxy-D-xylulose-5-phosphate synthase of Ruegeria pomeroyi (strain ATCC 700808 / DSM 15171 / DSS-3) (Silicibacter pomeroyi).